The sequence spans 250 residues: L-ascorbate peroxidase 1, cytosolic (250 aa).

The active-site Proton acceptor is His-42. Positions Val-113–Gly-137 are disordered. Residue His-163 participates in heme b binding. Residues Thr-164, Thr-180, Asn-182, and Asp-187 each coordinate K(+).

The protein belongs to the peroxidase family. Ascorbate peroxidase subfamily. It depends on heme b as a cofactor. Expressed in roots, aerial vegetative parts and reproductive organs. Expressed in roots, leaves, stems and flowers.

It localises to the cytoplasm. The enzyme catalyses L-ascorbate + H2O2 = L-dehydroascorbate + 2 H2O. Its activity is regulated as follows. Inhibited by p-chloromercuriphenylsulfonic acid (CMPSA). Its function is as follows. Plays a key role in hydrogen peroxide removal. This chain is L-ascorbate peroxidase 1, cytosolic, found in Oryza sativa subsp. japonica (Rice).